Here is a 913-residue protein sequence, read N- to C-terminus: Striatin-interacting protein homolog (913 aa).

Low complexity-rich tracts occupy residues 177–188 (QQQQQQQQNENE), 195–204 (TNFTTTTTTT), and 791–811 (NNNN…NNDN). Disordered regions lie at residues 177–204 (QQQQ…TTTT) and 791–814 (NNNN…NGLT).

This sequence belongs to the STRIP family.

The polypeptide is Striatin-interacting protein homolog (fam40) (Dictyostelium discoideum (Social amoeba)).